The following is a 156-amino-acid chain: Iron sulfur cluster assembly protein 2, mitochondrial (156 aa).

The N-terminal 26 residues, 1-26, are a transit peptide targeting the mitochondrion; sequence MFARLANPAHFKPLTGSHITRAAKRL.

Belongs to the NifU family. In terms of assembly, component of the core Fe-S cluster (ISC) assembly machinery. Interacts with frataxin. Interacts with the mitochondrial co-chaperones JAC1 and SSQ1. Interacts with NFS1. Interacts with ferredoxin YAH1; interacts with the reduced form. Requires [2Fe-2S] cluster as cofactor.

The protein resides in the mitochondrion matrix. The protein operates within cofactor biosynthesis; iron-sulfur cluster biosynthesis. In terms of biological role, scaffold protein for the de novo synthesis of iron-sulfur (Fe-S) clusters within mitochondria, which is required for maturation of both mitochondrial and cytoplasmic [2Fe-2S] and [4Fe-4S] proteins. First, a [2Fe-2S] cluster is transiently assembled on the scaffold proteins ISU1 and ISU2. In a second step, the cluster is released from ISU1/ISU2, transferred to glutaredoxin GRX5, followed by the formation of mitochondrial [2Fe-2S] proteins, the synthesis of [4Fe-4S] clusters and their target-specific insertion into the recipient apoproteins. Cluster assembly on ISU1/ISU2 depends on the function of the cysteine desulfurase complex NFS1-ISD11, which serves as the sulfur donor for cluster synthesis, the iron-binding protein frataxin (YFH1) as the putative iron donor, and the electron transfer chain comprised of ferredoxin reductase ARH1 and ferredoxin YAH1, which receive their electrons from NADH. Fe-S cluster release from ISU1/ISU2 is achieved by interaction with the Hsp70 chaperone SSQ1, assisted by the DnaJ-like co-chaperone JAC1 and the nucleotide exchange factor MGE1. ISU1 is the major isoform in yeast, while ISU2 is not detectable in cells grown to stationary phase. Also involved in production of a sulfur precursor required for thiolation of cytoplasmic tRNAs. In Saccharomyces cerevisiae (strain ATCC 204508 / S288c) (Baker's yeast), this protein is Iron sulfur cluster assembly protein 2, mitochondrial.